A 37-amino-acid polypeptide reads, in one-letter code: Large ribosomal subunit protein bL36 (37 aa).

It belongs to the bacterial ribosomal protein bL36 family.

The chain is Large ribosomal subunit protein bL36 from Solidesulfovibrio magneticus (strain ATCC 700980 / DSM 13731 / RS-1) (Desulfovibrio magneticus).